We begin with the raw amino-acid sequence, 115 residues long: Large ribosomal subunit protein uL24 (115 aa).

This sequence belongs to the universal ribosomal protein uL24 family. As to quaternary structure, part of the 50S ribosomal subunit.

In terms of biological role, one of two assembly initiator proteins, it binds directly to the 5'-end of the 23S rRNA, where it nucleates assembly of the 50S subunit. Its function is as follows. One of the proteins that surrounds the polypeptide exit tunnel on the outside of the subunit. The sequence is that of Large ribosomal subunit protein uL24 from Synechocystis sp. (strain ATCC 27184 / PCC 6803 / Kazusa).